Reading from the N-terminus, the 852-residue chain is Bifunctional heparan sulfate N-deacetylase/N-sulfotransferase 1 (852 aa).

Residues 1–13 (MIITPYLNRKITR) lie on the Cytoplasmic side of the membrane. The helical; Signal-anchor for type II membrane protein transmembrane segment at 14-34 (PLKWILALIFLYLIYICLFSN) threads the bilayer. The interval 34–574 (NNSKPPKPRK…PRHHAILPPS (541 aa)) is heparan sulfate N-deacetylase 1. Over 35–852 (NSKPPKPRKK…WLEESVRIRA (818 aa)) the chain is Lumenal. 7 N-linked (GlcNAc...) asparagine glycosylation sites follow: N50, N72, N261, N328, N377, N428, and N576. The interval 575–852 (INCTKKSLPD…WLEESVRIRA (278 aa)) is heparan sulfate N-sulfotransferase 1. Catalysis depends on K592, which acts as the For sulfotransferase activity. Position 592-596 (592-596 (KTGST)) interacts with 3'-phosphoadenylyl sulfate. Residue N607 is glycosylated (N-linked (GlcNAc...) asparagine). S686 contributes to the 3'-phosphoadenylyl sulfate binding site. Residue N712 is glycosylated (N-linked (GlcNAc...) asparagine). Cysteines 789 and 798 form a disulfide. 803 to 807 (KGRKY) contributes to the 3'-phosphoadenylyl sulfate binding site.

Belongs to the sulfotransferase 1 family. NDST subfamily. In terms of assembly, monomer. In terms of tissue distribution, present in some specific neurons in head and tail regions and muscles.

The protein localises to the golgi apparatus membrane. It catalyses the reaction alpha-D-glucosaminyl-[heparan sulfate](n) + 3'-phosphoadenylyl sulfate = N-sulfo-alpha-D-glucosaminyl-[heparan sulfate](n) + adenosine 3',5'-bisphosphate + 2 H(+). Its pathway is glycan metabolism; heparan sulfate biosynthesis. It participates in glycan metabolism; heparin biosynthesis. Functionally, essential bifunctional enzyme that catalyzes both the N-deacetylation and the N-sulfation of glucosamine (GlcNAc) of the glycosaminoglycan in heparan sulfate. Modifies the GlcNAc-GlcA disaccharide repeating sugar backbone to make N-sulfated heparosan, a prerequisite substrate for later modifications in heparin biosynthesis. The polypeptide is Bifunctional heparan sulfate N-deacetylase/N-sulfotransferase 1 (hst-1) (Caenorhabditis elegans).